The primary structure comprises 271 residues: Ribosomal RNA small subunit methyltransferase A (271 aa).

S-adenosyl-L-methionine contacts are provided by Asn28, Leu30, Gly54, Glu75, Asp99, and Asn117.

It belongs to the class I-like SAM-binding methyltransferase superfamily. rRNA adenine N(6)-methyltransferase family. RsmA subfamily.

It is found in the cytoplasm. It catalyses the reaction adenosine(1518)/adenosine(1519) in 16S rRNA + 4 S-adenosyl-L-methionine = N(6)-dimethyladenosine(1518)/N(6)-dimethyladenosine(1519) in 16S rRNA + 4 S-adenosyl-L-homocysteine + 4 H(+). Its function is as follows. Specifically dimethylates two adjacent adenosines (A1518 and A1519) in the loop of a conserved hairpin near the 3'-end of 16S rRNA in the 30S particle. May play a critical role in biogenesis of 30S subunits. The sequence is that of Ribosomal RNA small subunit methyltransferase A from Thermus thermophilus (strain ATCC BAA-163 / DSM 7039 / HB27).